We begin with the raw amino-acid sequence, 195 residues long: Large ribosomal subunit protein bL17 (195 aa).

Positions 125 to 195 are disordered; sequence ANRARRVGAS…PTQDSDADKS (71 aa). Residues 136-152 are compositionally biased toward low complexity; it reads QTAPVAAAAAPQAAVEP. Acidic residues-rich tracts occupy residues 153 to 173 and 183 to 195; these read EATE…EDTT and TDDP…ADKS.

The protein belongs to the bacterial ribosomal protein bL17 family. As to quaternary structure, part of the 50S ribosomal subunit. Contacts protein L32.

The polypeptide is Large ribosomal subunit protein bL17 (Mycobacterium sp. (strain JLS)).